We begin with the raw amino-acid sequence, 458 residues long: tRNA modification GTPase MnmE (458 aa).

3 residues coordinate (6S)-5-formyl-5,6,7,8-tetrahydrofolate: Arg26, Glu88, and Arg127. Positions 224-378 constitute a TrmE-type G domain; the sequence is GLSTAIIGRP…IEDRINQLFF (155 aa). A K(+)-binding site is contributed by Asn234. GTP is bound by residues 234 to 239, 253 to 259, and 278 to 281; these read NVGKSS, TDIAGTT, and DTAG. Ser238 contacts Mg(2+). Thr253, Ile255, and Thr258 together coordinate K(+). Residue Thr259 participates in Mg(2+) binding. (6S)-5-formyl-5,6,7,8-tetrahydrofolate is bound at residue Lys458.

This sequence belongs to the TRAFAC class TrmE-Era-EngA-EngB-Septin-like GTPase superfamily. TrmE GTPase family. As to quaternary structure, homodimer. Heterotetramer of two MnmE and two MnmG subunits. It depends on K(+) as a cofactor.

The protein resides in the cytoplasm. Exhibits a very high intrinsic GTPase hydrolysis rate. Involved in the addition of a carboxymethylaminomethyl (cmnm) group at the wobble position (U34) of certain tRNAs, forming tRNA-cmnm(5)s(2)U34. In Streptococcus pyogenes serotype M1, this protein is tRNA modification GTPase MnmE.